The primary structure comprises 461 residues: tRNA modification GTPase MnmE (461 aa).

(6S)-5-formyl-5,6,7,8-tetrahydrofolate contacts are provided by Arg23, Glu84, and Arg123. In terms of domain architecture, TrmE-type G spans 216–383 (GARAALIGRP…LGATVARLLL (168 aa)). Position 226 (Asn226) interacts with K(+). GTP is bound by residues 226–231 (NAGKSS), 245–251 (TPIPGTT), and 270–273 (DTAG). Ser230 contacts Mg(2+). K(+) is bound by residues Thr245, Ile247, and Thr250. Position 251 (Thr251) interacts with Mg(2+). Position 461 (Lys461) interacts with (6S)-5-formyl-5,6,7,8-tetrahydrofolate.

Belongs to the TRAFAC class TrmE-Era-EngA-EngB-Septin-like GTPase superfamily. TrmE GTPase family. As to quaternary structure, homodimer. Heterotetramer of two MnmE and two MnmG subunits. K(+) serves as cofactor.

Its subcellular location is the cytoplasm. Its function is as follows. Exhibits a very high intrinsic GTPase hydrolysis rate. Involved in the addition of a carboxymethylaminomethyl (cmnm) group at the wobble position (U34) of certain tRNAs, forming tRNA-cmnm(5)s(2)U34. This is tRNA modification GTPase MnmE from Roseiflexus sp. (strain RS-1).